Consider the following 397-residue polypeptide: Acetate kinase (397 aa).

Asn-7 lines the Mg(2+) pocket. Lys-14 serves as a coordination point for ATP. Residue Arg-90 coordinates substrate. The Proton donor/acceptor role is filled by Asp-147. Residues 207–211 (HLGNG), 282–284 (DFR), and 330–334 (GLGEN) each bind ATP. Mg(2+) is bound at residue Glu-383.

Belongs to the acetokinase family. Homodimer. The cofactor is Mg(2+). It depends on Mn(2+) as a cofactor.

The protein resides in the cytoplasm. The catalysed reaction is acetate + ATP = acetyl phosphate + ADP. It participates in metabolic intermediate biosynthesis; acetyl-CoA biosynthesis; acetyl-CoA from acetate: step 1/2. Its function is as follows. Catalyzes the formation of acetyl phosphate from acetate and ATP. Can also catalyze the reverse reaction. The polypeptide is Acetate kinase (Clostridium botulinum (strain ATCC 19397 / Type A)).